The chain runs to 173 residues: Bifunctional protein PyrR (173 aa).

The PRPP-binding motif lies at 93–105 (VILIDDVLYTGRT).

The protein belongs to the purine/pyrimidine phosphoribosyltransferase family. PyrR subfamily. Homodimer and homohexamer; in equilibrium.

The enzyme catalyses UMP + diphosphate = 5-phospho-alpha-D-ribose 1-diphosphate + uracil. Functionally, regulates transcriptional attenuation of the pyrimidine nucleotide (pyr) operon by binding in a uridine-dependent manner to specific sites on pyr mRNA. This disrupts an antiterminator hairpin in the RNA and favors formation of a downstream transcription terminator, leading to a reduced expression of downstream genes. Its function is as follows. Also displays a weak uracil phosphoribosyltransferase activity which is not physiologically significant. The chain is Bifunctional protein PyrR from Streptococcus pyogenes serotype M49 (strain NZ131).